The primary structure comprises 300 residues: Sodium/potassium/calcium exchanger 1 (300 aa).

Residues 1–251 (DPGSQGVGAE…ENEQPLSLEW (251 aa)) form a disordered region. Composition is skewed to acidic residues over residues 92–102 (GEVEGDEDEGE), 109–119 (GEVEGDEDEGE), 126–136 (GEVEGDEDEGE), 158–175 (GEVEGEDGEVEGGEDEGE), and 215–244 (GDSEDEEEEDEEEDEEEEEEEEEEEEEENE). Residues 259 to 275 (AIYLFLLPIVFPLWLTV) traverse the membrane as a helical segment.

This sequence belongs to the Ca(2+):cation antiporter (CaCA) (TC 2.A.19) family. SLC24A subfamily. In terms of processing, the uncleaved signal sequence is required for efficient membrane targeting and proper membrane integration and topology.

It localises to the cell membrane. It catalyses the reaction Ca(2+)(out) + K(+)(out) + 4 Na(+)(in) = Ca(2+)(in) + K(+)(in) + 4 Na(+)(out). Calcium, potassium:sodium antiporter that transports 1 Ca(2+) and 1 K(+) in exchange for 4 Na(+). Critical component of the visual transduction cascade, controlling the calcium concentration of outer segments during light and darkness. Light causes a rapid lowering of cytosolic free calcium in the outer segment of both retinal rod and cone photoreceptors and the light-induced lowering of calcium is caused by extrusion via this protein which plays a key role in the process of light adaptation. In Bison bison (American bison), this protein is Sodium/potassium/calcium exchanger 1 (SLC24A1).